The chain runs to 473 residues: GTPase Der (473 aa).

EngA-type G domains follow at residues 3-166 (PVIA…ENPE) and 177-350 (IRIG…ESAM). GTP is bound by residues 9-16 (GRPNVGKS), 56-60 (DTGGL), 118-121 (NKTD), 183-190 (GRPNVGKS), 230-234 (DTAGV), and 295-298 (NKWD). One can recognise a KH-like domain in the interval 351 to 435 (SKWPTNRLTA…PIRFEFKSGE (85 aa)). Residues 444 to 458 (RLTPRQKVKKDNDLK) are compositionally biased toward basic and acidic residues. A disordered region spans residues 444–473 (RLTPRQKVKKDNDLKKGRRIKKTRQKSVKR). The segment covering 459–473 (KGRRIKKTRQKSVKR) has biased composition (basic residues).

This sequence belongs to the TRAFAC class TrmE-Era-EngA-EngB-Septin-like GTPase superfamily. EngA (Der) GTPase family. Associates with the 50S ribosomal subunit.

GTPase that plays an essential role in the late steps of ribosome biogenesis. The sequence is that of GTPase Der from Marinobacter nauticus (strain ATCC 700491 / DSM 11845 / VT8) (Marinobacter aquaeolei).